The following is a 306-amino-acid chain: Leucotoxin LukEv (306 aa).

The first 23 residues, M1–A23, serve as a signal peptide directing secretion.

This sequence belongs to the aerolysin family. Toxicity requires sequential binding and synergistic association of a class S and a class F component which form heterooligomeric complexes. LukEv (class S) associates with LukDv (class F).

The protein localises to the secreted. Functionally, part of a bi-component leucotoxin that acts by forming pores in the membrane of the target cells. The activity of LukEv-LukDv to rabbit leukocytes is similar to that of the Panton-Valentine leucocidin (PVL). LukEv-LukDv is hemolytic to rabbit red blood cells although the activity is only 8% of gamma-hemolysin. This is Leucotoxin LukEv (lukEv) from Staphylococcus aureus (strain NCTC 8325 / PS 47).